The sequence spans 215 residues: 3-demethoxyubiquinol 3-hydroxylase (215 aa).

Glutamate 64, glutamate 94, histidine 97, glutamate 146, glutamate 178, and histidine 181 together coordinate Fe cation.

The protein belongs to the COQ7 family. It depends on Fe cation as a cofactor.

It localises to the cell membrane. The enzyme catalyses a 5-methoxy-2-methyl-3-(all-trans-polyprenyl)benzene-1,4-diol + AH2 + O2 = a 3-demethylubiquinol + A + H2O. Its pathway is cofactor biosynthesis; ubiquinone biosynthesis. Its function is as follows. Catalyzes the hydroxylation of 2-nonaprenyl-3-methyl-6-methoxy-1,4-benzoquinol during ubiquinone biosynthesis. The sequence is that of 3-demethoxyubiquinol 3-hydroxylase from Pseudomonas fluorescens (strain ATCC BAA-477 / NRRL B-23932 / Pf-5).